We begin with the raw amino-acid sequence, 161 residues long: Large ribosomal subunit protein uL29c (161 aa).

Residues 1–61 (MATMSLAAAS…ERRAAAMVAM (61 aa)) constitute a chloroplast transit peptide.

The protein belongs to the universal ribosomal protein uL29 family. As to quaternary structure, part of the 50S ribosomal subunit.

The protein localises to the plastid. Its subcellular location is the chloroplast. The protein is Large ribosomal subunit protein uL29c (RPL29) of Zea mays (Maize).